Reading from the N-terminus, the 284-residue chain is Pantothenate synthetase (284 aa).

Residue 30 to 37 (MGNLHEGH) coordinates ATP. The Proton donor role is filled by His37. A (R)-pantoate-binding site is contributed by Gln61. Residue Gln61 participates in beta-alanine binding. 149–152 (GEKD) contacts ATP. Position 155 (Gln155) interacts with (R)-pantoate. ATP is bound by residues Val178 and 186–189 (LSSR).

The protein belongs to the pantothenate synthetase family. In terms of assembly, homodimer.

The protein localises to the cytoplasm. It catalyses the reaction (R)-pantoate + beta-alanine + ATP = (R)-pantothenate + AMP + diphosphate + H(+). It participates in cofactor biosynthesis; (R)-pantothenate biosynthesis; (R)-pantothenate from (R)-pantoate and beta-alanine: step 1/1. Functionally, catalyzes the condensation of pantoate with beta-alanine in an ATP-dependent reaction via a pantoyl-adenylate intermediate. The sequence is that of Pantothenate synthetase from Yersinia pestis bv. Antiqua (strain Antiqua).